The sequence spans 634 residues: NRPS-independent siderophore synthetase rfs (634 aa).

In terms of biological role, NRPS-independent siderophore synthetase that catalyzes the rhizoferrin biosynthesis from citrate and diaminobutane via an ATP-dependent condensation of citrate with diaminobutane followed by the addition of a second citrate to the monocitryl-diaminobutane intermediate. Can also use as substrates the citrate and diaminobutane homologs oxaloacetic acid, diaminopropane, diaminobutane, diaminopentane, tricarballylic acid, hydroxylamine and ornithine. Forms only a mono-substituted intermediate with oxaloacetic acid and diaminopentane whereas both mono-citryl intermediates and full rhizoferrin derivatives were detected when diaminopropane, and ornithine were used as substrates. Tricarballylic acid only forms a rhizoferrin derivative, but no mono-substituted intermediate. In Rhizopus delemar (strain RA 99-880 / ATCC MYA-4621 / FGSC 9543 / NRRL 43880) (Mucormycosis agent), this protein is NRPS-independent siderophore synthetase rfs.